The sequence spans 272 residues: HMP-PP phosphatase (272 aa).

Asp8 (nucleophile) is an active-site residue. Residues Asp8, Asp10, and Asp212 each contribute to the Mg(2+) site.

It belongs to the HAD-like hydrolase superfamily. Cof family. The cofactor is Mg(2+).

The enzyme catalyses 4-amino-2-methyl-5-(diphosphooxymethyl)pyrimidine + H2O = 4-amino-2-methyl-5-(phosphooxymethyl)pyrimidine + phosphate + H(+). In terms of biological role, catalyzes the hydrolysis of 4-amino-2-methyl-5-hydroxymethylpyrimidine pyrophosphate (HMP-PP) to 4-amino-2-methyl-5-hydroxymethylpyrimidine phosphate (HMP-P). The chain is HMP-PP phosphatase from Escherichia fergusonii (strain ATCC 35469 / DSM 13698 / CCUG 18766 / IAM 14443 / JCM 21226 / LMG 7866 / NBRC 102419 / NCTC 12128 / CDC 0568-73).